Consider the following 453-residue polypeptide: MALWGGRFSQESSALFKLFNDSLPVDYRLVEEDIVGSIAWADAITGVGILSQQECQSLKQALQELLAEVKDQPETILASGAEDTHSFVEQALIAKVGDLGKKLHTGRSRNDQVATDLKLWCKKEGKALLELLAQLKAALLSLAERELDAVMPGYTHLQRAQPVAFGHWCLAYVEMFERDISRLQDCLQRLDTCPLGTGALAGTAYPMDRYALAKSLGFASPTLNSLDSVSDRDHVIELCSDAAISMMHLSRMAEDLIFFNSGEAGFIELDDQVTSGSSLMPQKKNPDALELIRGKTGRVYGSLMGILTTMKALPLAYNKDMQEDKEGLFDVMDSWSICLEMAALVLSGLKVNRENTLSAAQQGYANATELADYLVAKGMPFREAHHVVGEVVVEAIAQKKPIEEFELASLQVFASVIQEDVYQCLTIDSCLAKREALGGTSLTQVKAALAAKG.

It belongs to the lyase 1 family. Argininosuccinate lyase subfamily.

The protein localises to the cytoplasm. It catalyses the reaction 2-(N(omega)-L-arginino)succinate = fumarate + L-arginine. The protein operates within amino-acid biosynthesis; L-arginine biosynthesis; L-arginine from L-ornithine and carbamoyl phosphate: step 3/3. The chain is Argininosuccinate lyase from Shewanella loihica (strain ATCC BAA-1088 / PV-4).